Reading from the N-terminus, the 124-residue chain is Autophagy-related protein 8 (124 aa).

Gly116 carries Phosphatidylethanolamine amidated glycine lipidation. Residues 117–124 (GAGPLLEK) constitute a propeptide, removed in mature form.

The protein belongs to the ATG8 family. As to quaternary structure, conjugation to phosphatidylethanolamine (PE) leads to homodimerization. Interacts with ATG1, ATG3, ATG4, ATG7 and ATG12. Post-translationally, the C-terminal 8 residues of ATG8 are removed by ATG4 to expose Gly-116 at the C-terminus. This Gly-116 forms then a thioester bond with the 'Cys-550' of ATG7 (E1-like activating enzyme) before being transferred to the 'Cys-244' of ATG3 (the specific E2 conjugating enzyme), in order to be finally amidated with phosphatidylethanolamine. This lipid modification anchors ATG8 to membranes and can be reversed by ATG4, releasing soluble ATG8.

It is found in the cytoplasmic vesicle. The protein localises to the cvt vesicle membrane. The protein resides in the autophagosome membrane. It localises to the vacuole membrane. Its function is as follows. Ubiquitin-like modifier involved in cytoplasm to vacuole transport (Cvt) vesicles and autophagosome formation. With ATG4, mediates the delivery of the vesicles and autophagosomes to the vacuole via the microtubule cytoskeleton. Required for selective autophagic degradation of the nucleus (nucleophagy) as well as for mitophagy which contributes to regulate mitochondrial quantity and quality by eliminating the mitochondria to a basal level to fulfill cellular energy requirements and preventing excess ROS production. Also participates in membrane fusion events that take place in the early secretory pathway. Also involved in endoplasmic reticulum-specific autophagic process and is essential for the survival of cells subjected to severe ER stress. The ATG8-PE conjugate mediates tethering between adjacent membranes and stimulates membrane hemifusion, leading to expansion of the autophagosomal membrane during autophagy. Moreover not only conjugation, but also subsequent ATG8-PE deconjugation is an important step required to facilitate multiple events during macroautophagy, and especially for efficient autophagosome biogenesis, the assembly of ATG9-containing tubulovesicular clusters into phagophores/autophagosomes, and for the disassembly of PAS-associated ATG components. This is Autophagy-related protein 8 from Kluyveromyces marxianus (strain DMKU3-1042 / BCC 29191 / NBRC 104275) (Yeast).